Here is a 1766-residue protein sequence, read N- to C-terminus: DNA-directed RNA polymerase II subunit RPB1-A (1766 aa).

4 residues coordinate Zn(2+): Cys-69, Cys-72, Cys-79, and His-82. Residues Asp-487, Asp-489, and Asp-491 each contribute to the Mg(2+) site. Residues 813 to 825 (PHEFFFHTMAGRE) are bridging helix. The disordered stretch occupies residues 1660 to 1766 (HAMSSAAPPS…EFGDEEEEEQ (107 aa)). Positions 1706-1716 (RGDEPSTHRSD) are enriched in basic and acidic residues. Low complexity predominate over residues 1742 to 1756 (PTAKTPQQAAPPTAA).

It belongs to the RNA polymerase beta' chain family. In terms of assembly, component of the RNA polymerase II (Pol II) complex consisting of 12 subunits.

Its subcellular location is the nucleus. The enzyme catalyses RNA(n) + a ribonucleoside 5'-triphosphate = RNA(n+1) + diphosphate. In terms of biological role, DNA-dependent RNA polymerase catalyzes the transcription of DNA into RNA using the four ribonucleoside triphosphates as substrates. Largest and catalytic component of RNA polymerase II which synthesizes mRNA precursors and many functional non-coding RNAs. Forms the polymerase active center together with the second largest subunit. Pol II is the central component of the basal RNA polymerase II transcription machinery. It is composed of mobile elements that move relative to each other. RPB1 is part of the core element with the central large cleft, the clamp element that moves to open and close the cleft and the jaws that are thought to grab the incoming DNA template. At the start of transcription, a single-stranded DNA template strand of the promoter is positioned within the central active site cleft of Pol II. A bridging helix emanates from RPB1 and crosses the cleft near the catalytic site and is thought to promote translocation of Pol II by acting as a ratchet that moves the RNA-DNA hybrid through the active site by switching from straight to bent conformations at each step of nucleotide addition. During transcription elongation, Pol II moves on the template as the transcript elongates. The sequence is that of DNA-directed RNA polymerase II subunit RPB1-A (TRP4.8) from Trypanosoma brucei brucei.